Consider the following 895-residue polypeptide: AP-1 complex subunit gamma (895 aa).

HEAT repeat units follow at residues 130-166 (TAMARDISPEIEKVISHSNPYIRKKAALCAIRVLRKV), 167-205 (PDLTENYIPKIKALLSERNHAVILTALTLIIEICEMDST), 211-256 (KKMV…ILGQ), 301-339 (NGLKVMAINILGRFLLNRDNNIRYVALNTLSRVVNTDIQ), and 341-376 (VQRHRNTIVECLKDPDVSIRCRALDLIYSLVTESNI). Disordered regions lie at residues 591 to 687 (KQEE…MNNM), 706 to 733 (NNNSMGGMMNNNNNNNNNNNNNNNNNKS), and 746 to 770 (QLTPTPQQPQSQSQQALSPTNQTSV). Composition is skewed to low complexity over residues 604-626 (PTQTPPQQHYQQQQQQPQQQSSQ), 639-658 (QSSANSGNNNNNNNKQGGNA), 675-687 (NGNMNNNNNMNNM), 706-731 (NNNSMGGMMNNNNNNNNNNNNNNNNN), and 746-765 (QLTPTPQQPQSQSQQALSPT). Residues 775 to 893 (PQPLTFLVYQ…SDVPDTPLPS (119 aa)) enclose the GAE domain.

This sequence belongs to the adaptor complexes large subunit family. Adaptor protein complex 1 (AP-1) is a heterotetramer composed of two large adaptins (gamma-type subunit and beta-type subunit), a medium adaptin (mu-type subunit) and a small adaptin (sigma-type subunit). Interacts with rhgA.

It localises to the golgi apparatus. The protein localises to the trans-Golgi network. Its subcellular location is the cytoplasmic vesicle. The protein resides in the clathrin-coated vesicle membrane. Its function is as follows. Subunit of clathrin-associated adaptor protein complex 1 that plays a role in protein sorting in the trans-Golgi network (TGN) and endosomes. The AP complexes mediate the recruitment of clathrin to membranes and the recognition of sorting signals within the cytosolic tails of transmembrane cargo molecules. Also involved in early steps of phagocytosis and macropinocytosis. This is AP-1 complex subunit gamma (ap1g1) from Dictyostelium discoideum (Social amoeba).